Consider the following 369-residue polypeptide: 2-aminoethylphosphonate--pyruvate transaminase (369 aa).

The residue at position 193 (Lys193) is an N6-(pyridoxal phosphate)lysine.

The protein belongs to the class-V pyridoxal-phosphate-dependent aminotransferase family. PhnW subfamily. As to quaternary structure, homodimer. The cofactor is pyridoxal 5'-phosphate.

It catalyses the reaction (2-aminoethyl)phosphonate + pyruvate = phosphonoacetaldehyde + L-alanine. Its function is as follows. Involved in phosphonate degradation. This chain is 2-aminoethylphosphonate--pyruvate transaminase, found in Burkholderia pseudomallei (strain 1106a).